The chain runs to 339 residues: Immunoglobulin-binding protein 1 (339 aa).

Alanine 2 carries the post-translational modification N-acetylalanine. Residues 46-60 form the UIM domain; the sequence is LDLLEKAAEMLSQLD. An interaction with PPP2CA region spans residues 98 to 202; sequence RLDHLQRARE…YLLHLQRWID (105 aa). Disordered regions lie at residues 221 to 243 and 289 to 339; these read RDSSREASTSNSSRQERPPVKPF and APEE…QNMG. The interaction with MID1 stretch occupies residues 225 to 290; sequence REASTSNSSR…PDQGIAKAAP (66 aa). Lysine 241 bears the N6-acetyllysine mark. Residues 301 to 312 show a composition bias toward acidic residues; sequence EEQEEKEEEDDE. The segment covering 313–329 has biased composition (basic and acidic residues); the sequence is QTLHRAREWDDWKDTHP.

Belongs to the IGBP1/TAP42 family. As to quaternary structure, interacts with partially folded PPP2CA, but not with the fully active protein. Interacts with PPP2CB, and with PP4 and PP6. Interacts with MID1 and MID2. Interacts with ubiquitin. Phosphorylated. Post-translationally, monoubiquitination by MID1 triggers calpain-mediated cleavage and switches IGBP1 activity from protective to destructive. As to expression, ubiquitously expressed with highest levels in heart, skeletal muscle and pancreas.

Its subcellular location is the cytoplasm. Its function is as follows. Associated to surface IgM-receptor; may be involved in signal transduction. Involved in regulation of the catalytic activity of the phosphatases PP2A, PP4 and PP6 by protecting their partially folded catalytic subunits from degradative polyubiquitination until they associate with regulatory subunits. The protein is Immunoglobulin-binding protein 1 (IGBP1) of Homo sapiens (Human).